Reading from the N-terminus, the 307-residue chain is Putative serpin A13 (307 aa).

A signal peptide spans 1-21 (MEASRWWLLVTVLMAGAHCVA). N-linked (GlcNAc...) asparagine glycans are attached at residues Asn150 and Asn250.

It belongs to the serpin family.

The protein localises to the secreted. The sequence is that of Putative serpin A13 (SERPINA13P) from Homo sapiens (Human).